We begin with the raw amino-acid sequence, 370 residues long: Prolactin-releasing peptide receptor (370 aa).

Topologically, residues 1-62 are extracellular; it reads MASLPTQGPA…LQLVHQLKGL (62 aa). 2 N-linked (GlcNAc...) asparagine glycosylation sites follow: Asn-27 and Asn-36. A helical transmembrane segment spans residues 63-83; that stretch reads IVLLYSIVVVVGLVGNCLLVL. Residues 84–101 lie on the Cytoplasmic side of the membrane; it reads VIARVRRLHNVTNFLIGN. A helical membrane pass occupies residues 102–122; sequence LALSDVLMCTACVPLTLAYAF. The Extracellular portion of the chain corresponds to 123-126; that stretch reads EPRG. A helical membrane pass occupies residues 127–147; sequence WVFGGGLCHLVFFLQPVTVYV. Cys-134 and Cys-211 are oxidised to a cystine. The Cytoplasmic segment spans residues 148–175; it reads SVFTLTTIAVDRYVVLVHPLRRRISLRF. Residues 176–196 form a helical membrane-spanning segment; it reads SAYAVLAIWALSAVLALPAAL. The Extracellular segment spans residues 197-225; the sequence is HTYHVELKPHRVRLCEEFWGSQERQRQLY. The helical transmembrane segment at 226–246 threads the bilayer; it reads AWGLLLVTYLLPLLVILLSYV. Residues 247-276 are Cytoplasmic-facing; the sequence is RVSVNLRNRVVPGCVTQSQADWDRARRRRT. A helical membrane pass occupies residues 277–297; it reads FCLLVVVVVVFAVCWLPLHVF. Topologically, residues 298–317 are extracellular; that stretch reads NLLRDLDPHAIDPYAFGLVQ. A helical transmembrane segment spans residues 318 to 338; it reads LLCHWLAMSSACYNPFIYAWL. The Cytoplasmic segment spans residues 339–369; sequence HDSFREELRKLLLAWPRKIAPHGQSMTVSVV. The tract at residues 365-370 is required for interaction with GRIP1, GRIP2 and PICK1; sequence TVSVVI.

It belongs to the G-protein coupled receptor 1 family. In terms of assembly, interacts through its C-terminal region with the PDZ domain-containing proteins GRIP1, GRIP2 and PICK1. Interacts with PDZ domains 4 and 5 of GRIP1 and with the PDZ domain of PICK1.

Its subcellular location is the cell membrane. Functionally, receptor for prolactin-releasing peptide (PrRP). Implicated in lactation, regulation of food intake and pain-signal processing. This is Prolactin-releasing peptide receptor (PRLHR) from Bos taurus (Bovine).